We begin with the raw amino-acid sequence, 381 residues long: Dual specificity protein phosphatase 6 (381 aa).

The region spanning 30 to 148 (GNERLLLMDC…FQAEFSLHCE (119 aa)) is the Rhodanese domain. A disordered region spans residues 176–203 (SSSDIESDLDRDPNSATDSDGSPLSNSQ). Positions 189 to 203 (NSATDSDGSPLSNSQ) are enriched in polar residues. The 144-residue stretch at 206-349 (FPVEILPFLY…LLDFERTLGL (144 aa)) folds into the Tyrosine-protein phosphatase domain. Residue Cys-293 is the Phosphocysteine intermediate of the active site.

Belongs to the protein-tyrosine phosphatase family. Non-receptor class dual specificity subfamily. Interacts with MAPK1/ERK2. Ubiquitinated by the SCF(FBXO31) complex, leading to its proteasomal degradation. In terms of tissue distribution, expressed in keratinocytes (at protein level).

Its subcellular location is the cytoplasm. The catalysed reaction is O-phospho-L-tyrosyl-[protein] + H2O = L-tyrosyl-[protein] + phosphate. It catalyses the reaction O-phospho-L-seryl-[protein] + H2O = L-seryl-[protein] + phosphate. The enzyme catalyses O-phospho-L-threonyl-[protein] + H2O = L-threonyl-[protein] + phosphate. Functionally, dual specificity protein phosphatase, which mediates dephosphorylation and inactivation of MAP kinases. Has a specificity for the ERK family. Plays an important role in alleviating chronic postoperative pain. Necessary for the normal dephosphorylation of the long-lasting phosphorylated forms of spinal MAPK1/3 and MAP kinase p38 induced by peripheral surgery, which drives the resolution of acute postoperative allodynia. Also important for dephosphorylation of MAPK1/3 in local wound tissue, which further contributes to resolution of acute pain. Promotes cell differentiation by regulating MAPK1/MAPK3 activity and regulating the expression of AP1 transcription factors. In Homo sapiens (Human), this protein is Dual specificity protein phosphatase 6 (DUSP6).